The primary structure comprises 185 residues: Transcription termination/antitermination protein NusG (185 aa).

The 30-residue stretch at 134–163 (VGQQVRIVEGPFATFSGEVEEVMSERNKVR) folds into the KOW domain.

Belongs to the NusG family.

Its function is as follows. Participates in transcription elongation, termination and antitermination. This is Transcription termination/antitermination protein NusG from Treponema pallidum (strain Nichols).